We begin with the raw amino-acid sequence, 157 residues long: uncharacterized protein (157 aa).

The region spanning 9-154 is the N-acetyltransferase domain; sequence LLINYKTLDE…ETNLNAVTNE (146 aa).

This is an uncharacterized protein from Bacillus cereus (strain ATCC 14579 / DSM 31 / CCUG 7414 / JCM 2152 / NBRC 15305 / NCIMB 9373 / NCTC 2599 / NRRL B-3711).